Consider the following 369-residue polypeptide: Dof zinc finger protein DOF2.5 (369 aa).

The Dof-type zinc-finger motif lies at 80–134 (LNCPRCNSTNTKFCYYNNYSLTQPRYFCKGCRRYWTEGGSLRNVPVGGSSRKNKR). The Zn(2+) site is built by Cys-82, Cys-85, Cys-107, and Cys-110. 4 disordered regions span residues 120 to 149 (LRNVPVGGSSRKNKRSSSSSSSNILQTIPS), 203 to 224 (EGNGNITHQQQPSSSSSVYGSS), 284 to 304 (TDHQGLGHNSNNRSEALHSDH), and 322 to 369 (SSSI…GSSW). The segment covering 214 to 224 (PSSSSSVYGSS) has biased composition (low complexity). The segment covering 284–297 (TDHQGLGHNSNNRS) has biased composition (polar residues). Residues 342–362 (NNNNNNNSSPNNGYWSGMFST) are compositionally biased toward low complexity.

In terms of tissue distribution, expressed in the vascular system of the mother plant, but not present in the seed and embryo. In maturing siliques, found all through the funiculus connecting the placenta to the ovule, but not in the ovule.

The protein resides in the nucleus. In terms of biological role, transcription factor specifically involved in the maternal control of seed germination. Regulates transcription by binding to a 5'-AA[AG]G-3' consensus core sequence. May ensure the activation of a component that would trigger germination as a consequence of red light perception. This Arabidopsis thaliana (Mouse-ear cress) protein is Dof zinc finger protein DOF2.5 (DOF2.5).